The primary structure comprises 295 residues: Acetylglutamate kinase (295 aa).

Residues G64 to G65, R86, and N190 each bind substrate.

The protein belongs to the acetylglutamate kinase family. ArgB subfamily.

The protein resides in the cytoplasm. The catalysed reaction is N-acetyl-L-glutamate + ATP = N-acetyl-L-glutamyl 5-phosphate + ADP. Its pathway is amino-acid biosynthesis; L-arginine biosynthesis; N(2)-acetyl-L-ornithine from L-glutamate: step 2/4. Functionally, catalyzes the ATP-dependent phosphorylation of N-acetyl-L-glutamate. The protein is Acetylglutamate kinase of Heliobacterium modesticaldum (strain ATCC 51547 / Ice1).